Reading from the N-terminus, the 488-residue chain is Mannosylglycerate hydrolase MGH1 (488 aa).

Residues Tyr94, 98-101 (WNWD), Tyr146, Gln167, and Gly227 contribute to the substrate site. Residue Asp229 is the Proton donor of the active site. Substrate is bound by residues Arg262 and 415 to 416 (YW). The active-site Proton acceptor is the Glu459.

The protein belongs to the glycosyl hydrolase 63 family.

It catalyses the reaction (2R)-2-O-(alpha-D-mannosyl)-glycerate + H2O = D-mannose + (R)-glycerate. The enzyme catalyses (2R)-2-O-(alpha-D-glucopyranosyl)-glycerate + H2O = (R)-glycerate + D-glucose. Its activity is regulated as follows. Activity is not dependent on divalent cations, but it is enhanced by Mn(2+). Catalyzes the hydrolysis of alpha-D-mannosyl-glycerate (MG) to D-glycerate and D-mannose. Can also hydrolyze alpha-D-glucopyranosyl-glycerate (GG)with lower efficiency. The chain is Mannosylglycerate hydrolase MGH1 from Selaginella moellendorffii (Spikemoss).